Reading from the N-terminus, the 202-residue chain is dTTP/UTP pyrophosphatase (202 aa).

Catalysis depends on D76, which acts as the Proton acceptor.

It belongs to the Maf family. YhdE subfamily. It depends on a divalent metal cation as a cofactor.

Its subcellular location is the cytoplasm. It carries out the reaction dTTP + H2O = dTMP + diphosphate + H(+). The enzyme catalyses UTP + H2O = UMP + diphosphate + H(+). Functionally, nucleoside triphosphate pyrophosphatase that hydrolyzes dTTP and UTP. May have a dual role in cell division arrest and in preventing the incorporation of modified nucleotides into cellular nucleic acids. This Neisseria gonorrhoeae (strain ATCC 700825 / FA 1090) protein is dTTP/UTP pyrophosphatase.